Consider the following 73-residue polypeptide: UPF0352 protein HSM_0097 (73 aa).

It belongs to the UPF0352 family.

The polypeptide is UPF0352 protein HSM_0097 (Histophilus somni (strain 2336) (Haemophilus somnus)).